The chain runs to 554 residues: Glucose-6-phosphate isomerase (554 aa).

The active-site Proton donor is the Glu-359. Active-site residues include His-390 and Lys-518.

Belongs to the GPI family.

The protein resides in the cytoplasm. It catalyses the reaction alpha-D-glucose 6-phosphate = beta-D-fructose 6-phosphate. It participates in carbohydrate biosynthesis; gluconeogenesis. The protein operates within carbohydrate degradation; glycolysis; D-glyceraldehyde 3-phosphate and glycerone phosphate from D-glucose: step 2/4. Functionally, catalyzes the reversible isomerization of glucose-6-phosphate to fructose-6-phosphate. The polypeptide is Glucose-6-phosphate isomerase (Pseudomonas putida (strain W619)).